We begin with the raw amino-acid sequence, 143 residues long: Large ribosomal subunit protein uL11 (143 aa).

Belongs to the universal ribosomal protein uL11 family. As to quaternary structure, part of the ribosomal stalk of the 50S ribosomal subunit. Interacts with L10 and the large rRNA to form the base of the stalk. L10 forms an elongated spine to which L12 dimers bind in a sequential fashion forming a multimeric L10(L12)X complex. In terms of processing, one or more lysine residues are methylated.

Its function is as follows. Forms part of the ribosomal stalk which helps the ribosome interact with GTP-bound translation factors. The chain is Large ribosomal subunit protein uL11 from Psychrobacter cryohalolentis (strain ATCC BAA-1226 / DSM 17306 / VKM B-2378 / K5).